Consider the following 489-residue polypeptide: Rhamnulokinase (489 aa).

Ala13–Arg17 contacts ATP. Cys68 and Cys222 form a disulfide bridge. Residues Gly83 and His236–Thr238 each bind substrate. Asp237 functions as the Proton acceptor in the catalytic mechanism. Position 259 (Thr259) interacts with ATP. A substrate-binding site is contributed by Asn296. ATP is bound at residue Gln304. An intrachain disulfide couples Cys353 to Cys370. Gly402 serves as a coordination point for ATP. Cysteines 413 and 417 form a disulfide.

This sequence belongs to the rhamnulokinase family. In terms of assembly, monomer. Mg(2+) serves as cofactor.

It catalyses the reaction L-rhamnulose + ATP = L-rhamnulose 1-phosphate + ADP + H(+). It participates in carbohydrate degradation; L-rhamnose degradation; glycerone phosphate from L-rhamnose: step 2/3. Functionally, involved in the catabolism of L-rhamnose (6-deoxy-L-mannose). Catalyzes the transfer of the gamma-phosphate group from ATP to the 1-hydroxyl group of L-rhamnulose to yield L-rhamnulose 1-phosphate. The sequence is that of Rhamnulokinase from Escherichia fergusonii (strain ATCC 35469 / DSM 13698 / CCUG 18766 / IAM 14443 / JCM 21226 / LMG 7866 / NBRC 102419 / NCTC 12128 / CDC 0568-73).